We begin with the raw amino-acid sequence, 719 residues long: Plasmin and fibronectin-binding protein A (719 aa).

Residues 1–45 (MLKIVKKLEVLMKYFVPNEVFSIRKLKVGTCSVLLAISILGSQGI) form the signal peptide. Disordered stretches follow at residues 56–76 (PMATKESSNAITNDLDNSPTV) and 109–128 (IRSNSQLDNRTVESTVTSTN). PbH1 repeat units follow at residues 287-310 (SNNVTIKNVTFKDSYQGHAIQIAG), 362-384 (SENVTIQNSYFGKSDKSGELVTA), 397-419 (PSNIKILNNHFDNMMYAGVRFTG), 497-523 (VSDITVTKNVINNNSKETEQPNIELLR), and 525-546 (SDNLVVSENSIFGGKEGIVIED). The stretch at 601–658 (NNLSDKNEKEKNKEEKQSNSNNVIDSNQKNGEFNSSKDNRQMNDKIDNKQDNKTEEVN) forms a coiled coil. Over residues 606–617 (KNEKEKNKEEKQ) the composition is skewed to basic and acidic residues. Positions 606–655 (KNEKEKNKEEKQSNSNNVIDSNQKNGEFNSSKDNRQMNDKIDNKQDNKTE) are disordered. A compositionally biased stretch (polar residues) spans 623–634 (VIDSNQKNGEFN). Residues 635–655 (SSKDNRQMNDKIDNKQDNKTE) show a composition bias toward basic and acidic residues. The short motif at 685 to 689 (LPKTG) is the LPXTG sorting signal element. Threonine 688 is subject to Pentaglycyl murein peptidoglycan amidated threonine. Positions 689 to 719 (GSNKIMELFLTVTGIGLLLTLKGLKYYGKDK) are cleaved as a propeptide — removed by sortase.

Its subcellular location is the secreted. It localises to the cell wall. Its function is as follows. Acts as a fibronectin-dependent adhesin and invasin. Binds host (in this case human) fibronectin, plasmin, plasminogen, and human serum albumin. Where the bacteria adhere to human cells there is major recruitment of microvilli which seem to fuse to cover the streptococcal chains. Antibodies to this protein reduce bacterial growth in human blood. The protein is Plasmin and fibronectin-binding protein A (pfbA) of Streptococcus pneumoniae (strain ATCC BAA-255 / R6).